Reading from the N-terminus, the 203-residue chain is Ribonuclease HII (203 aa).

Residues 16–203 enclose the RNase H type-2 domain; it reads ENIACCDEVG…HRKSFLNKIL (188 aa). A divalent metal cation-binding residues include D22, E23, and D120.

Belongs to the RNase HII family. Mn(2+) is required as a cofactor. It depends on Mg(2+) as a cofactor.

It localises to the cytoplasm. It catalyses the reaction Endonucleolytic cleavage to 5'-phosphomonoester.. Its function is as follows. Endonuclease that specifically degrades the RNA of RNA-DNA hybrids. The polypeptide is Ribonuclease HII (Alkaliphilus oremlandii (strain OhILAs) (Clostridium oremlandii (strain OhILAs))).